The chain runs to 1071 residues: Myosin IF heavy chain (1071 aa).

One can recognise a Myosin motor domain in the interval 40–736; the sequence is VGLTDMCFLE…TLFHFEELRQ (697 aa). ATP is bound at residue 134–141; that stretch reads GESGSGKT. Residues 610–632 are actin-binding; the sequence is INDLIGKLNTCQPHYIRCIKSNE. In terms of domain architecture, IQ spans 739-768; it reads LPSIVITIQRVWRGYKVRKWYKQELQRLRE. Residues 870-1069 enclose the TH1 domain; sequence SRKKEWDCRR…KGNTAIVYYN (200 aa).

It belongs to the TRAFAC class myosin-kinesin ATPase superfamily. Myosin family. Myosin I heavy chain is single-headed. Dimer of a heavy and a light chain. Inability to self-assemble into filaments.

Myosin is a protein that binds to actin and has ATPase activity that is activated by actin. This chain is Myosin IF heavy chain (myoF), found in Dictyostelium discoideum (Social amoeba).